The chain runs to 507 residues: ATP synthase subunit alpha, chloroplastic (507 aa).

170–177 (GDRQTGKT) serves as a coordination point for ATP.

It belongs to the ATPase alpha/beta chains family. F-type ATPases have 2 components, CF(1) - the catalytic core - and CF(0) - the membrane proton channel. CF(1) has five subunits: alpha(3), beta(3), gamma(1), delta(1), epsilon(1). CF(0) has four main subunits: a, b, b' and c.

Its subcellular location is the plastid. The protein resides in the chloroplast thylakoid membrane. It carries out the reaction ATP + H2O + 4 H(+)(in) = ADP + phosphate + 5 H(+)(out). In terms of biological role, produces ATP from ADP in the presence of a proton gradient across the membrane. The alpha chain is a regulatory subunit. This chain is ATP synthase subunit alpha, chloroplastic, found in Nymphaea alba (White water-lily).